A 66-amino-acid polypeptide reads, in one-letter code: Large ribosomal subunit protein bL31 (66 aa).

Residues C16, C18, C36, and C39 each coordinate Zn(2+).

It belongs to the bacterial ribosomal protein bL31 family. Type A subfamily. In terms of assembly, part of the 50S ribosomal subunit during exponential growth. It depends on Zn(2+) as a cofactor.

In terms of biological role, binds the 23S rRNA. Its function is as follows. While neither of the L31 paralogs is essential, this protein seems to function as the main L31 protein. Has a lower affinity for 70S ribosomes than the non-zinc-containing paralog L31B (ytiA); is displaced by it to varying extents, even under zinc-replete conditions. This chain is Large ribosomal subunit protein bL31 (rpmE), found in Bacillus subtilis (strain 168).